Reading from the N-terminus, the 159-residue chain is MPYTINSPSQFVYLSSAYADPVQLINLCTNALGNQFQTQQARTTVQQQFADAWKPVPSMTVRFPASDFYVYRYNSTLDPLITALLNSFDTRNRIIEVDNQPAPNTTEIVNATQRVDDATVAIRASINNLANELVRGTGMFNQAGFETASGLVWTTTPAT.

This sequence belongs to the virgaviridae capsid protein family.

The protein localises to the virion. In terms of biological role, capsid protein self-assembles to form rod-shaped virions about 18 nm in diameter with a central canal enclosing the viral genomic RNA. The sequence is that of Capsid protein (CP) from Tobacco mild green mosaic virus (TMGMV).